The primary structure comprises 333 residues: GTPase Obg (333 aa).

The Obg domain maps to 1-159 (MKFIDEATIT…ATVRLELKLL (159 aa)). The disordered stretch occupies residues 63 to 85 (KQFAAPNGAPGEGRQKTGKSGDD). Basic and acidic residues predominate over residues 75–84 (GRQKTGKSGD). One can recognise an OBG-type G domain in the interval 160–329 (ADVGLIGLPN…LKKHLFELLC (170 aa)). Residues 166–173 (GLPNAGKS), 191–195 (FTTLS), 213–216 (DIPG), 283–286 (NKMD), and 310–312 (SAA) each bind GTP. Positions 173 and 193 each coordinate Mg(2+).

The protein belongs to the TRAFAC class OBG-HflX-like GTPase superfamily. OBG GTPase family. In terms of assembly, monomer. Mg(2+) serves as cofactor.

The protein resides in the cytoplasm. An essential GTPase which binds GTP, GDP and possibly (p)ppGpp with moderate affinity, with high nucleotide exchange rates and a fairly low GTP hydrolysis rate. Plays a role in control of the cell cycle, stress response, ribosome biogenesis and in those bacteria that undergo differentiation, in morphogenesis control. The protein is GTPase Obg of Desulfosudis oleivorans (strain DSM 6200 / JCM 39069 / Hxd3) (Desulfococcus oleovorans).